The following is a 284-amino-acid chain: 1D-myo-inositol 2-acetamido-2-deoxy-alpha-D-glucopyranoside deacetylase (284 aa).

Zn(2+)-binding residues include histidine 12, aspartate 15, and histidine 146.

The protein belongs to the MshB deacetylase family. It depends on Zn(2+) as a cofactor.

The enzyme catalyses 1D-myo-inositol 2-acetamido-2-deoxy-alpha-D-glucopyranoside + H2O = 1D-myo-inositol 2-amino-2-deoxy-alpha-D-glucopyranoside + acetate. Its function is as follows. Catalyzes the deacetylation of 1D-myo-inositol 2-acetamido-2-deoxy-alpha-D-glucopyranoside (GlcNAc-Ins) in the mycothiol biosynthesis pathway. The sequence is that of 1D-myo-inositol 2-acetamido-2-deoxy-alpha-D-glucopyranoside deacetylase from Mycolicibacterium gilvum (strain PYR-GCK) (Mycobacterium gilvum (strain PYR-GCK)).